The chain runs to 72 residues: Translation initiation factor IF-1 (72 aa).

The region spanning 1 to 72 is the S1-like domain; sequence MTKEDNIEMQ…TKGRIIFRSR (72 aa).

Belongs to the IF-1 family. In terms of assembly, component of the 30S ribosomal translation pre-initiation complex which assembles on the 30S ribosome in the order IF-2 and IF-3, IF-1 and N-formylmethionyl-tRNA(fMet); mRNA recruitment can occur at any time during PIC assembly.

The protein localises to the cytoplasm. One of the essential components for the initiation of protein synthesis. Stabilizes the binding of IF-2 and IF-3 on the 30S subunit to which N-formylmethionyl-tRNA(fMet) subsequently binds. Helps modulate mRNA selection, yielding the 30S pre-initiation complex (PIC). Upon addition of the 50S ribosomal subunit IF-1, IF-2 and IF-3 are released leaving the mature 70S translation initiation complex. The protein is Translation initiation factor IF-1 of Buchnera aphidicola subsp. Schizaphis graminum (strain Sg).